The sequence spans 663 residues: UvrABC system protein B (663 aa).

Residues 1-10 show a composition bias toward basic and acidic residues; sequence MIDKRDDKPF. Residues 1–23 form a disordered region; the sequence is MIDKRDDKPFKLKSKYKPSGDQP. In terms of domain architecture, Helicase ATP-binding spans 31-271; that stretch reads DNIEGGEKAQ…EQSIAKIQAE (241 aa). 44–51 lines the ATP pocket; that stretch reads GATGTGKT. A Beta-hairpin motif is present at residues 97–120; it reads YYDYYQPEAYVPSSDTYIEKDSSV. Residues 435-601 enclose the Helicase C-terminal domain; it reads QMDDLLGEIN…TIKKDIRGLI (167 aa). The UVR domain occupies 627–662; the sequence is KEAINALQKQMQEAAELLDFELAAQMRDLILELKLM.

The protein belongs to the UvrB family. Forms a heterotetramer with UvrA during the search for lesions. Interacts with UvrC in an incision complex.

It localises to the cytoplasm. In terms of biological role, the UvrABC repair system catalyzes the recognition and processing of DNA lesions. A damage recognition complex composed of 2 UvrA and 2 UvrB subunits scans DNA for abnormalities. Upon binding of the UvrA(2)B(2) complex to a putative damaged site, the DNA wraps around one UvrB monomer. DNA wrap is dependent on ATP binding by UvrB and probably causes local melting of the DNA helix, facilitating insertion of UvrB beta-hairpin between the DNA strands. Then UvrB probes one DNA strand for the presence of a lesion. If a lesion is found the UvrA subunits dissociate and the UvrB-DNA preincision complex is formed. This complex is subsequently bound by UvrC and the second UvrB is released. If no lesion is found, the DNA wraps around the other UvrB subunit that will check the other stand for damage. The chain is UvrABC system protein B from Streptococcus pyogenes serotype M2 (strain MGAS10270).